The following is a 560-amino-acid chain: Hypermethylated in cancer 2 protein (560 aa).

Residues 24–87 (CDVIIVVENA…IYTGKLLSSD (64 aa)) enclose the BTB domain. 2 disordered regions span residues 122–163 (RSLL…KTKR) and 183–367 (HCTT…GGRN). Polar residues-rich tracts occupy residues 126 to 153 (NKPT…NQMS) and 183 to 203 (HCTT…NGSC). Residues 224–242 (EEVSPSSIPQESPQSASES) are compositionally biased toward low complexity. The segment covering 243–259 (TANSASFDENPNTQNLT) has biased composition (polar residues). Over residues 296 to 308 (PKSEGKKGEDMER) the composition is skewed to basic and acidic residues. The segment covering 348-362 (ENGQEQSEESGQSEN) has biased composition (low complexity). 5 consecutive C2H2-type zinc fingers follow at residues 387 to 409 (YVCI…VETH), 450 to 472 (FSCS…EKTH), 478 to 500 (FPCN…MRSH), 506 to 528 (FACE…MRVH), and 534 to 556 (YECQ…LRMH).

This sequence belongs to the krueppel C2H2-type zinc-finger protein family. Hic subfamily.

It is found in the nucleus. Transcriptional repressor. The chain is Hypermethylated in cancer 2 protein (hic2) from Danio rerio (Zebrafish).